The sequence spans 259 residues: Type III pantothenate kinase (259 aa).

6–13 (DTGNTNTV) is an ATP binding site. 107-110 (GPDR) contributes to the substrate binding site. Asp-109 functions as the Proton acceptor in the catalytic mechanism. Asp-129 is a binding site for K(+). Thr-132 serves as a coordination point for ATP. Thr-184 is a binding site for substrate.

This sequence belongs to the type III pantothenate kinase family. In terms of assembly, homodimer. NH4(+) serves as cofactor. The cofactor is K(+).

It is found in the cytoplasm. The enzyme catalyses (R)-pantothenate + ATP = (R)-4'-phosphopantothenate + ADP + H(+). Its pathway is cofactor biosynthesis; coenzyme A biosynthesis; CoA from (R)-pantothenate: step 1/5. Catalyzes the phosphorylation of pantothenate (Pan), the first step in CoA biosynthesis. This is Type III pantothenate kinase from Paracoccus denitrificans (strain Pd 1222).